The chain runs to 464 residues: ATP synthase subunit beta (464 aa).

152–159 (GGAGVGKT) lines the ATP pocket.

Belongs to the ATPase alpha/beta chains family. As to quaternary structure, F-type ATPases have 2 components, CF(1) - the catalytic core - and CF(0) - the membrane proton channel. CF(1) has five subunits: alpha(3), beta(3), gamma(1), delta(1), epsilon(1). CF(0) has three main subunits: a(1), b(2) and c(9-12). The alpha and beta chains form an alternating ring which encloses part of the gamma chain. CF(1) is attached to CF(0) by a central stalk formed by the gamma and epsilon chains, while a peripheral stalk is formed by the delta and b chains.

The protein resides in the cell membrane. The enzyme catalyses ATP + H2O + 4 H(+)(in) = ADP + phosphate + 5 H(+)(out). Produces ATP from ADP in the presence of a proton gradient across the membrane. The catalytic sites are hosted primarily by the beta subunits. This chain is ATP synthase subunit beta, found in Clostridioides difficile (strain 630) (Peptoclostridium difficile).